The primary structure comprises 1148 residues: Transcription-repair-coupling factor (1148 aa).

One can recognise a Helicase ATP-binding domain in the interval 615–776 (DMCQPLAMDR…MSGMRDLSII (162 aa)). 628–635 (GDVGFGKT) contacts ATP. Positions 729–732 (DEEH) match the DEEH box motif. Residues 798–951 (VREAILREIL…GFALATHDLE (154 aa)) enclose the Helicase C-terminal domain.

The protein in the N-terminal section; belongs to the UvrB family. In the C-terminal section; belongs to the helicase family. RecG subfamily. As to quaternary structure, monomer. Interacts with UvrA and RNAP.

Its subcellular location is the cytoplasm. Its function is as follows. Couples transcription and DNA repair by recognizing RNA polymerase (RNAP) stalled at DNA lesions. Mediates ATP-dependent release of RNAP and its truncated transcript from the DNA, and recruitment of nucleotide excision repair machinery to the damaged site. Can also dissociate RNAP that is blocked by low concentration of nucleoside triphosphates or by physical obstruction, such as bound proteins. In addition, can rescue arrested complexes by promoting forward translocation. Has ATPase activity, which is required for removal of stalled RNAP, but seems to lack helicase activity. May act through a translocase activity that rewinds upstream DNA, leading either to translocation or to release of RNAP when the enzyme active site cannot continue elongation. This chain is Transcription-repair-coupling factor, found in Escherichia coli (strain K12).